The primary structure comprises 1300 residues: uncharacterized protein (1300 aa).

A signal peptide spans 1 to 26 (MGYKLKRWPLVAFTFTGIGLGVVLAA). Cys27 carries N-palmitoyl cysteine lipidation. Residue Cys27 is the site of S-diacylglycerol cysteine attachment. Positions 464–478 (AMAAASTGADSSSGT) are enriched in low complexity. 4 disordered regions span residues 464–487 (AMAA…SGGN), 620–639 (ASVS…DTQE), 774–797 (DSQK…NDKK), and 1244–1269 (KMSD…SPRT). 2 stretches are compositionally biased toward polar residues: residues 620–637 (ASVS…STDT) and 774–783 (DSQKSTNTVK). The segment covering 785-797 (PDIKPTRENNDKK) has biased composition (basic and acidic residues). Residues 1257-1269 (TIRKPKPHHSPRT) are compositionally biased toward basic residues.

It belongs to the MG307/MG309/MG338 family.

It is found in the cell membrane. This is an uncharacterized protein from Mycoplasma pneumoniae (strain ATCC 29342 / M129 / Subtype 1) (Mycoplasmoides pneumoniae).